Reading from the N-terminus, the 188-residue chain is MRQYCLLLIVLALAAALSDNAVASTLAVARSEIGAPSAVYSERLLRSEPQDEDTFEDRAFGLNWLRLRWLRLGAAKAKTTDVISARESKWIEAWANKNLSPNYVYKQLGLAKQGDKAMQSQNYRIFEAYTERLFAKDQALYTKWLDAKMTPEDVYKALKLDKLLGAKAANSPDFRRYEVYMFKWHELN.

The first 16 residues, 1–16 (MRQYCLLLIVLALAAA), serve as a signal peptide directing secretion. The RxLR-dEER motif lies at 43–58 (RLLRSEPQDEDTFEDR). A Host plasma membrane localization motif motif is present at residues 73–78 (GAAKAK).

Belongs to the RxLR effector family.

Its subcellular location is the secreted. It localises to the host cell membrane. Functionally, effector that triggers cell death in a variety of plant species (including tobacco, tomato and soybean), regardless of the Rps genes present. Avh241 interacts with the plant immune system via at least two different mechanisms, one recognized by plants dependent on subcellular localization and one promoting infection independent on membrane localization. The cell death triggered by Avh241 in N.benthamiana requires the two host mitogen-activated protein kinases, MEK2 and WIPK. The polypeptide is RxLR effector protein Avh241 (Phytophthora sojae (strain P6497) (Soybean stem and root rot agent)).